We begin with the raw amino-acid sequence, 138 residues long: Large ribosomal subunit protein uL16 (138 aa).

Residues 1–13 (MLQPARRKFRKEQ) show a composition bias toward basic residues. The disordered stretch occupies residues 1–22 (MLQPARRKFRKEQKGRNTGLAT).

Belongs to the universal ribosomal protein uL16 family. As to quaternary structure, part of the 50S ribosomal subunit.

Its function is as follows. Binds 23S rRNA and is also seen to make contacts with the A and possibly P site tRNAs. The polypeptide is Large ribosomal subunit protein uL16 (Thiobacillus denitrificans (strain ATCC 25259 / T1)).